The following is a 480-amino-acid chain: F-box/LRR-repeat protein 14 (480 aa).

Residues 11–58 (DRQMDELPDHLVWDILSKLHTTDDRNSLSLSCKRFFSLDNEQRYSLRI) form the F-box domain. LRR repeat units follow at residues 61-86 (GLVPASDALLSLCRRFPNLSKVEIIY), 94-119 (GKQVDDQGLLVLTTNCHSLTDLTLSF), 120-144 (CTFITDVGIGHLSSCPELSSLKLNF), 145-170 (APRITGCGVLSLAVGCKKLRRLHLIR), 171-196 (CLNVASVEWLEYFGKLETLEELCIKN), 197-222 (CRAIGEGDLIKLRNSWRKLTSLQFEV), 229-257 (MKVYDQLDVERWPKQLVPCDSLVELSLGN), 258-283 (CIIAPGRGLACVLRNCKNLEKLHLDM), 284-309 (CTGVSDSDIIALVQKASHLRSISLRV), 322-347 (TLRLTDESLSAIAQHCSKLESFKISF), 355-379 (LFSFTLQGIITLIQKCPVRELSLDH), 380-404 (VCVFNDMGMEALCSAQKLEILELVH), 405-429 (CQEVSDEGLILVSQFPSLNVLKLSK), 430-454 (CLGVTDDGMRPLVGSHKLELLVVED), and 455-480 (CPQVSRRGVHGAATSVSFKQDLSWMY).

This Arabidopsis thaliana (Mouse-ear cress) protein is F-box/LRR-repeat protein 14 (FBL14).